The primary structure comprises 339 residues: Methylthioribose-1-phosphate isomerase (339 aa).

Residues arginine 50–alanine 52, arginine 84, and glutamine 186 contribute to the substrate site. Aspartate 227 (proton donor) is an active-site residue. Position 237–238 (asparagine 237–lysine 238) interacts with substrate.

This sequence belongs to the eIF-2B alpha/beta/delta subunits family. MtnA subfamily.

It catalyses the reaction 5-(methylsulfanyl)-alpha-D-ribose 1-phosphate = 5-(methylsulfanyl)-D-ribulose 1-phosphate. Its pathway is amino-acid biosynthesis; L-methionine biosynthesis via salvage pathway; L-methionine from S-methyl-5-thio-alpha-D-ribose 1-phosphate: step 1/6. Its function is as follows. Catalyzes the interconversion of methylthioribose-1-phosphate (MTR-1-P) into methylthioribulose-1-phosphate (MTRu-1-P). This is Methylthioribose-1-phosphate isomerase from Sulfurihydrogenibium sp. (strain YO3AOP1).